A 323-amino-acid polypeptide reads, in one-letter code: Ribosomal RNA small subunit methyltransferase H (323 aa).

Residues 44-46, D64, Y91, D112, and Q119 each bind S-adenosyl-L-methionine; that span reads AGH.

It belongs to the methyltransferase superfamily. RsmH family.

The protein resides in the cytoplasm. The catalysed reaction is cytidine(1402) in 16S rRNA + S-adenosyl-L-methionine = N(4)-methylcytidine(1402) in 16S rRNA + S-adenosyl-L-homocysteine + H(+). Functionally, specifically methylates the N4 position of cytidine in position 1402 (C1402) of 16S rRNA. The polypeptide is Ribosomal RNA small subunit methyltransferase H (Nitratidesulfovibrio vulgaris (strain ATCC 29579 / DSM 644 / CCUG 34227 / NCIMB 8303 / VKM B-1760 / Hildenborough) (Desulfovibrio vulgaris)).